Reading from the N-terminus, the 704-residue chain is MNPMQGPRSIGGSSTEVNQVDGESIYCTETSLNTMLNPADTGFPNNSTPSGRPTYASSSSHAAQDHTWWRFGESSSIPGPSDQVNSIGIKTSHQLPQDGTHHFVGYGSEGRQTGLNGMMVDGGVHAGSHIRNVPSFLRGSSSNPMPQHVDMSMDMDSDNCNAQTSGVVIRHNSYGSSLGSSVQAAGESSSGPASPFGGWGSSCKRKALEGSPSHYFSGETPNRIVQTENSASHASLSQYGASSSLSLATPSQSSPNVTNHFGRTEQMFGSGGGRAVAASAFHSTRNTDTLSRAGRRLNPRQPQESVAFSVSHGGTSVRPTGSLQQNLPLNSPFVDPPDVRSSSITSGSNTGENQTNIVHLPALTRNIHQYAWDASFSSRASNPSGIGMPAERLGPQWETPRSNQEQPLFAPATDMRQPVHDLWNFARGSPGSSVDSLFVPRAGPSSAIHTPQPNPTWIPPQNAPPHNPSRTSELSPWSLFPSIESPSASHGGPLPLLPAGPSVSSNEVTMPSSSNSRSHRSRHRRSGLLLERQNELLHLRHIGRSLAADGNGRNQIISEIRQVLHAMRRGENLRVEDYMVFDPLIYQGMTDMHDRHREMRLDVDNMSYEELLALGERIGDVSTGLSEEVILKAMKQHKHTSSSPSSVELHQNIEPCCICQEEYVEGDNLGTLKCGHEFHKDCIKQWVMIKNLCPICKTEALKTP.

Disordered stretches follow at residues 1-20 (MNPM…VNQV), 37-61 (NPAD…SSSH), 176-197 (SSLG…SPFG), 245-354 (LSLA…GENQ), 381-403 (SNPS…PRSN), and 436-525 (SLFV…RHRR). Residues 43 to 61 (FPNNSTPSGRPTYASSSSH) show a composition bias toward polar residues. Low complexity-rich tracts occupy residues 184–196 (AAGE…ASPF) and 245–255 (LSLATPSQSSP). Polar residues-rich tracts occupy residues 281 to 290 (FHSTRNTDTL), 300 to 329 (RQPQ…NLPL), and 340 to 354 (RSSS…GENQ). Over residues 452–467 (QPNPTWIPPQNAPPHN) the composition is skewed to pro residues. Over residues 485–505 (SPSASHGGPLPLLPAGPSVSS) the composition is skewed to low complexity. The RING-type; atypical zinc finger occupies 656 to 697 (CCICQEEYVEGDNLGTLKCGHEFHKDCIKQWVMIKNLCPICK).

This sequence belongs to the RING-type zinc finger family. Interacts with MED25 and UBC11.

The catalysed reaction is S-ubiquitinyl-[E2 ubiquitin-conjugating enzyme]-L-cysteine + [acceptor protein]-L-lysine = [E2 ubiquitin-conjugating enzyme]-L-cysteine + N(6)-ubiquitinyl-[acceptor protein]-L-lysine.. Its pathway is protein modification; protein ubiquitination. Functionally, E3 ubiquitin-protein ligase that functions as a regulator of MED25 stability by targeting MED25 for degradation in a RING-H2-dependent way. Proteasome-dependent degradation of MED25 seems to activate its function as positive regulator of FLOWERING LOCUS T (FT) and is important to induce the expression of FT and consequently to promote flowering. This Arabidopsis thaliana (Mouse-ear cress) protein is E3 ubiquitin-protein ligase MBR1 (MBR1).